A 393-amino-acid chain; its full sequence is Sugar efflux transporter B (393 aa).

Transmembrane regions (helical) follow at residues 13-33 (FDLT…AGAL), 51-71 (AMVG…SQFL), 82-102 (KSLI…FAWN), 106-126 (FVLL…NPQM), 152-172 (VSLA…GFSF), 174-194 (VMYL…WLFL), 219-239 (LLLF…IINM), 253-273 (LAGV…LIAG), 283-303 (FLMR…LMAH), 306-326 (VILL…GGIG), 344-364 (LYTN…GIVA), and 366-386 (IWNY…TLFC).

Belongs to the major facilitator superfamily. Set transporter family.

The protein localises to the cell inner membrane. Functionally, involved in the efflux of sugars. The physiological role may be the detoxification of non-metabolizable sugar analogs. Can transport lactose and glucose. This chain is Sugar efflux transporter B (setB), found in Escherichia coli (strain K12).